A 409-amino-acid chain; its full sequence is Protein ROOT PRIMORDIUM DEFECTIVE 1 (409 aa).

Positions 47–386 constitute a PORR domain; the sequence is VRDHGYDNYM…RLAELVLMSP (340 aa).

In terms of tissue distribution, expressed in roots, hypocotyls, cotyledons and shoot apex.

Its function is as follows. Involved in pre-arranging the maintenance of the active cell proliferation during root primordium development. Does not seem to be involved in cell cycle progression. This chain is Protein ROOT PRIMORDIUM DEFECTIVE 1 (RPD1), found in Arabidopsis thaliana (Mouse-ear cress).